The sequence spans 127 residues: Aspartate 1-decarboxylase (127 aa).

The active-site Schiff-base intermediate with substrate; via pyruvic acid is serine 25. Position 25 is a pyruvic acid (Ser) (serine 25). Residue threonine 57 coordinates substrate. Tyrosine 58 serves as the catalytic Proton donor. Residue 73–75 (GAA) participates in substrate binding.

Belongs to the PanD family. Heterooctamer of four alpha and four beta subunits. Pyruvate is required as a cofactor. Is synthesized initially as an inactive proenzyme, which is activated by self-cleavage at a specific serine bond to produce a beta-subunit with a hydroxyl group at its C-terminus and an alpha-subunit with a pyruvoyl group at its N-terminus.

It localises to the cytoplasm. The catalysed reaction is L-aspartate + H(+) = beta-alanine + CO2. It participates in cofactor biosynthesis; (R)-pantothenate biosynthesis; beta-alanine from L-aspartate: step 1/1. In terms of biological role, catalyzes the pyruvoyl-dependent decarboxylation of aspartate to produce beta-alanine. The protein is Aspartate 1-decarboxylase of Listeria monocytogenes serovar 1/2a (strain ATCC BAA-679 / EGD-e).